A 398-amino-acid chain; its full sequence is Homeobox protein knotted-1-like 1 (398 aa).

Disordered regions lie at residues threonine 43 to histidine 69, glutamate 172 to leucine 192, and asparagine 234 to glutamate 277. Over residues serine 49–glycine 58 the composition is skewed to gly residues. The ELK domain occupies glutamate 280–leucine 300. The segment at residues serine 301–serine 364 is a DNA-binding region (homeobox; TALE-type).

The protein belongs to the TALE/KNOX homeobox family. Expressed only in the stems.

The protein localises to the nucleus. Probably binds to the DNA sequence 5'-TGAC-3'. In Malus domestica (Apple), this protein is Homeobox protein knotted-1-like 1.